Reading from the N-terminus, the 225-residue chain is Uracil-DNA glycosylase (225 aa).

The active-site Proton acceptor is the Asp-65.

The protein belongs to the uracil-DNA glycosylase (UDG) superfamily. UNG family.

The protein resides in the cytoplasm. The enzyme catalyses Hydrolyzes single-stranded DNA or mismatched double-stranded DNA and polynucleotides, releasing free uracil.. Functionally, excises uracil residues from the DNA which can arise as a result of misincorporation of dUMP residues by DNA polymerase or due to deamination of cytosine. The protein is Uracil-DNA glycosylase of Bacillus cereus (strain B4264).